Consider the following 170-residue polypeptide: Methanogen homoaconitase small subunit (170 aa).

The YLRT motif lies at 26–29 (YLRT).

This sequence belongs to the LeuD family. LeuD type 2 subfamily. As to quaternary structure, heterotetramer of 2 HacA and 2 HacB proteins.

It catalyses the reaction (2R)-homocitrate = (2R,3S)-homoisocitrate. The enzyme catalyses (2R)-homocitrate = cis-homoaconitate + H2O. It carries out the reaction (2R,3S)-homoisocitrate = cis-homoaconitate + H2O. The catalysed reaction is cis-(homo)2aconitate + H2O = (2R,3S)-iso(homo)2citrate. It catalyses the reaction cis-(homo)3aconitate + H2O = (2R,3S)-iso(homo)3citrate. It functions in the pathway organic acid metabolism; 2-oxosuberate biosynthesis. Its function is as follows. Component of a hydro-lyase with broad substrate specificity for cis-unsaturated tricarboxylic acids. Catalyzes both the reversible dehydration of (R)-homocitrate ((R)-2-hydroxybutane-1,2,4-tricarboxylate) to produce cis-homoaconitate ((Z)-but-1-ene-1,2,4-tricarboxylate), and its hydration to homoisocitrate ((1R,2S)-1-hydroxybutane-1,2,4-tricarboxylate). Is also able to hydrate the analogous longer chain substrates cis-homo(2)-aconitate, cis-homo(3)-aconitate. These reactions are part of the biosynthesis pathway of coenzyme B. In Methanothermobacter thermautotrophicus (strain ATCC 29096 / DSM 1053 / JCM 10044 / NBRC 100330 / Delta H) (Methanobacterium thermoautotrophicum), this protein is Methanogen homoaconitase small subunit (hacB).